We begin with the raw amino-acid sequence, 120 residues long: Small ribosomal subunit protein uS13 (120 aa).

Residues Gly94–Lys120 are disordered.

This sequence belongs to the universal ribosomal protein uS13 family. In terms of assembly, part of the 30S ribosomal subunit. Forms a loose heterodimer with protein S19. Forms two bridges to the 50S subunit in the 70S ribosome.

Located at the top of the head of the 30S subunit, it contacts several helices of the 16S rRNA. In the 70S ribosome it contacts the 23S rRNA (bridge B1a) and protein L5 of the 50S subunit (bridge B1b), connecting the 2 subunits; these bridges are implicated in subunit movement. Contacts the tRNAs in the A and P-sites. The protein is Small ribosomal subunit protein uS13 of Azoarcus sp. (strain BH72).